The primary structure comprises 194 residues: Dof zinc finger protein DOF4.2 (194 aa).

Residues 21–75 (RVCPRCYSDQTRFSYFNNNKKSQPRYKCKNCCRCWTHGGVLRNIPVTGICDKSNL) form a Dof-type zinc finger. The Zn(2+) site is built by Cys23, Cys26, Cys48, and Cys51.

It is found in the nucleus. Transcription factor that binds specifically to a 5'-AA[AG]G-3' consensus core sequence. The chain is Dof zinc finger protein DOF4.2 (DOF4.2) from Arabidopsis thaliana (Mouse-ear cress).